The following is a 264-amino-acid chain: Carbonic anhydrase 7 (264 aa).

Residues 5 to 262 enclose the Alpha-carbonic anhydrase domain; it reads HCWGYGQDDG…LKGRVVKASF (258 aa). The active-site Proton donor/acceptor is H66. H96, H98, and H121 together coordinate Zn(2+). 201–202 lines the substrate pocket; it reads TT.

It belongs to the alpha-carbonic anhydrase family. Zn(2+) serves as cofactor.

Its subcellular location is the cytoplasm. It carries out the reaction hydrogencarbonate + H(+) = CO2 + H2O. Reversible hydration of carbon dioxide. This is Carbonic anhydrase 7 (Ca7) from Mus musculus (Mouse).